Here is a 340-residue protein sequence, read N- to C-terminus: Maltose epimerase (340 aa).

Arginine 79 provides a ligand contact to substrate. Histidine 178 (proton donor) is an active-site residue. Aspartate 247 serves as a coordination point for substrate. Glutamate 305 acts as the Proton acceptor in catalysis.

This sequence belongs to the aldose epimerase family.

It catalyses the reaction alpha-maltose = beta-maltose. Its pathway is carbohydrate metabolism; hexose metabolism. Catalyzes the interconversion of alpha and beta anomers of maltose. This chain is Maltose epimerase, found in Levilactobacillus brevis (strain ATCC 367 / BCRC 12310 / CIP 105137 / JCM 1170 / LMG 11437 / NCIMB 947 / NCTC 947) (Lactobacillus brevis).